Consider the following 276-residue polypeptide: Undecaprenyl-diphosphatase (276 aa).

The next 8 helical transmembrane spans lie at 1 to 21 (MELY…FLPV), 40 to 60 (ALSF…LVFF), 93 to 113 (VRLA…GLIL), 120 to 140 (LFSS…FLWL), 154 to 174 (IGFG…IPGI), 199 to 219 (FLLS…ESFA), 227 to 247 (VTLL…VALL), and 255 to 275 (FYLF…AGFV).

It belongs to the UppP family.

The protein localises to the cell inner membrane. The catalysed reaction is di-trans,octa-cis-undecaprenyl diphosphate + H2O = di-trans,octa-cis-undecaprenyl phosphate + phosphate + H(+). Catalyzes the dephosphorylation of undecaprenyl diphosphate (UPP). Confers resistance to bacitracin. This chain is Undecaprenyl-diphosphatase, found in Desulforapulum autotrophicum (strain ATCC 43914 / DSM 3382 / VKM B-1955 / HRM2) (Desulfobacterium autotrophicum).